Consider the following 65-residue polypeptide: uncharacterized protein (65 aa).

It localises to the plastid. Its subcellular location is the chloroplast. This is an uncharacterized protein from Porphyra purpurea (Red seaweed).